Reading from the N-terminus, the 368-residue chain is MPNAIVAAEQYREIFLNQHPIMDVRAPIEFTRGAFPNSTNLPLMLDSEREKVGTCYKQSGQQAAIALGHSLVNGPIKQQRIEAWTSYVKANPNAYLYCFRGGLRSQLTQQWLKEAGVEVPYIQGGYKAMRQYLIGVIEAAPIQQPLLSLSGMTGCGKTDFLLQRKEAVDLEGIANHRGSSFGKNIDPQPTQINFENQLAIALLQHQTSGVACLLLEDESFLIGRSALPQTFYNAMQAANVLVLEESDDARLERLRNEYVHKMYSGFCERLGPEAGFAAFSDYLLQSLVSIRKRLGGKQHQELQDLMQQALDQQINQNDTSLHLVWINLLLHKYYDPMYLYQLDKKSERVLFKGSHQAMHEWLDSYQTR.

Residues 15 to 138 (FLNQHPIMDV…MRQYLIGVIE (124 aa)) form the Rhodanese domain. Cys98 (S-selanylcysteine intermediate) is an active-site residue.

It belongs to the SelU family. In terms of assembly, monomer.

It catalyses the reaction 5-methylaminomethyl-2-thiouridine(34) in tRNA + selenophosphate + (2E)-geranyl diphosphate + H2O + H(+) = 5-methylaminomethyl-2-selenouridine(34) in tRNA + (2E)-thiogeraniol + phosphate + diphosphate. It carries out the reaction 5-methylaminomethyl-2-thiouridine(34) in tRNA + (2E)-geranyl diphosphate = 5-methylaminomethyl-S-(2E)-geranyl-thiouridine(34) in tRNA + diphosphate. The catalysed reaction is 5-methylaminomethyl-S-(2E)-geranyl-thiouridine(34) in tRNA + selenophosphate + H(+) = 5-methylaminomethyl-2-(Se-phospho)selenouridine(34) in tRNA + (2E)-thiogeraniol. The enzyme catalyses 5-methylaminomethyl-2-(Se-phospho)selenouridine(34) in tRNA + H2O = 5-methylaminomethyl-2-selenouridine(34) in tRNA + phosphate. Involved in the post-transcriptional modification of the uridine at the wobble position (U34) of tRNA(Lys), tRNA(Glu) and tRNA(Gln). Catalyzes the conversion of 2-thiouridine (S2U-RNA) to 2-selenouridine (Se2U-RNA). Acts in a two-step process involving geranylation of 2-thiouridine (S2U) to S-geranyl-2-thiouridine (geS2U) and subsequent selenation of the latter derivative to 2-selenouridine (Se2U) in the tRNA chain. In Shewanella baltica (strain OS185), this protein is tRNA 2-selenouridine synthase.